A 416-amino-acid chain; its full sequence is D-amino acid dehydrogenase (416 aa).

3 to 17 (VIVLGAGIVGVTSAY) lines the FAD pocket.

Belongs to the DadA oxidoreductase family. It depends on FAD as a cofactor.

The catalysed reaction is a D-alpha-amino acid + A + H2O = a 2-oxocarboxylate + AH2 + NH4(+). It functions in the pathway amino-acid degradation; D-alanine degradation; NH(3) and pyruvate from D-alanine: step 1/1. Oxidative deamination of D-amino acids. The chain is D-amino acid dehydrogenase from Rhizobium johnstonii (strain DSM 114642 / LMG 32736 / 3841) (Rhizobium leguminosarum bv. viciae).